The primary structure comprises 184 residues: Large ribosomal subunit protein uL6 (184 aa).

It belongs to the universal ribosomal protein uL6 family. As to quaternary structure, part of the 50S ribosomal subunit.

In terms of biological role, this protein binds to the 23S rRNA, and is important in its secondary structure. It is located near the subunit interface in the base of the L7/L12 stalk, and near the tRNA binding site of the peptidyltransferase center. The protein is Large ribosomal subunit protein uL6 of Mycoplasma genitalium (strain ATCC 33530 / DSM 19775 / NCTC 10195 / G37) (Mycoplasmoides genitalium).